A 608-amino-acid chain; its full sequence is Protein trichome birefringence (608 aa).

Residues 38–58 (TFAYAFVITFVSFTLFFAFSP) form a helical; Signal-anchor for type II membrane protein membrane-spanning segment. Composition is skewed to polar residues over residues 101 to 137 (STKP…QTPA) and 145 to 203 (AKNT…TSPA). The tract at residues 101–236 (STKPTNRSSD…TPKKQTKTVD (136 aa)) is disordered. Residues 215–227 (TNSSSNSSTASST) show a composition bias toward low complexity. Residues 328–330 (GDS) carry the GDS motif motif. Residues 573 to 587 (DCSHWCLPGVPDSWN) carry the DCXHWCLPGXXDXWN motif motif.

Belongs to the PC-esterase family. TBL subfamily. In terms of tissue distribution, expressed in leaf vasculature, growing part of the root, expanding inflorescence stems and trichomes.

The protein resides in the membrane. In terms of biological role, required during cellulose deposition. May act as a bridging protein that binds pectin and other cell wall polysaccharides. Probably involved in maintaining esterification of pectins. May be involved in the specific O-acetylation of cell wall polymers. In Arabidopsis thaliana (Mouse-ear cress), this protein is Protein trichome birefringence (TBR).